The primary structure comprises 570 residues: Urease subunit alpha (570 aa).

The Urease domain occupies 131–570 (GGMDSHIHFI…LPMAQRYFLF (440 aa)). H136, H138, and K219 together coordinate Ni(2+). K219 is subject to N6-carboxylysine. H221 provides a ligand contact to substrate. Ni(2+) is bound by residues H248 and H274. H322 serves as the catalytic Proton donor. D362 is a Ni(2+) binding site.

The protein belongs to the metallo-dependent hydrolases superfamily. Urease alpha subunit family. Heterotrimer of UreA (gamma), UreB (beta) and UreC (alpha) subunits. Three heterotrimers associate to form the active enzyme. It depends on Ni cation as a cofactor. Post-translationally, carboxylation allows a single lysine to coordinate two nickel ions.

Its subcellular location is the cytoplasm. The enzyme catalyses urea + 2 H2O + H(+) = hydrogencarbonate + 2 NH4(+). It participates in nitrogen metabolism; urea degradation; CO(2) and NH(3) from urea (urease route): step 1/1. This chain is Urease subunit alpha, found in Rhizobium leguminosarum bv. trifolii (strain WSM2304).